We begin with the raw amino-acid sequence, 132 residues long: Small ribosomal subunit protein uS8 (132 aa).

Belongs to the universal ribosomal protein uS8 family. As to quaternary structure, part of the 30S ribosomal subunit. Contacts proteins S5 and S12.

Its function is as follows. One of the primary rRNA binding proteins, it binds directly to 16S rRNA central domain where it helps coordinate assembly of the platform of the 30S subunit. This chain is Small ribosomal subunit protein uS8, found in Rickettsia akari (strain Hartford).